The following is a 132-amino-acid chain: Small ribosomal subunit protein uS8 (132 aa).

This sequence belongs to the universal ribosomal protein uS8 family. Part of the 30S ribosomal subunit. Contacts proteins S5 and S12.

In terms of biological role, one of the primary rRNA binding proteins, it binds directly to 16S rRNA central domain where it helps coordinate assembly of the platform of the 30S subunit. This chain is Small ribosomal subunit protein uS8, found in Kineococcus radiotolerans (strain ATCC BAA-149 / DSM 14245 / SRS30216).